Reading from the N-terminus, the 254-residue chain is NAD-dependent glycerol dehydrogenase (254 aa).

An NAD(+)-binding site is contributed by 18–47 (VVTGAASGIGKAMAELFSEKGAYVVLLDIK). Residue Tyr160 is the Proton acceptor of the active site. Lys164 provides a ligand contact to NAD(+).

It belongs to the short-chain dehydrogenases/reductases (SDR) family. Requires Mg(2+) as cofactor. The cofactor is Mn(2+).

Its subcellular location is the cytoplasm. The catalysed reaction is glycerol + NAD(+) = dihydroxyacetone + NADH + H(+). Inhibited by Zn(2+). Involved in the glycerol metabolism. Catalyzes the NAD-dependent oxidation of glycerol to dihydroxyacetone (glycerone). GolD specifically uses NAD. This chain is NAD-dependent glycerol dehydrogenase, found in Listeria innocua serovar 6a (strain ATCC BAA-680 / CLIP 11262).